The following is a 577-amino-acid chain: Adenine deaminase (577 aa).

Belongs to the metallo-dependent hydrolases superfamily. Adenine deaminase family. Requires Mn(2+) as cofactor.

It catalyses the reaction adenine + H2O + H(+) = hypoxanthine + NH4(+). The polypeptide is Adenine deaminase (adeC) (Bacillus subtilis (strain 168)).